Consider the following 335-residue polypeptide: Foldase protein PrsA (335 aa).

The first 22 residues, 1–22, serve as a signal peptide directing secretion; that stretch reads MRSAKKLLSVLCLGVFILTFTA. Cysteine 23 carries the N-palmitoyl cysteine lipid modification. Cysteine 23 is lipidated: S-diacylglycerol cysteine. Positions 194 to 285 constitute a PpiC domain; sequence PNTMNVSHIL…FGYHIIKINS (92 aa).

It belongs to the PrsA family.

The protein resides in the cell membrane. It catalyses the reaction [protein]-peptidylproline (omega=180) = [protein]-peptidylproline (omega=0). Its function is as follows. Plays a major role in protein secretion by helping the post-translocational extracellular folding of several secreted proteins. In Clostridium botulinum (strain Loch Maree / Type A3), this protein is Foldase protein PrsA.